The primary structure comprises 368 residues: Glutamate 5-kinase (368 aa).

Lysine 12 is a binding site for ATP. The substrate site is built by serine 52, aspartate 139, and asparagine 151. ATP contacts are provided by residues serine 171 to aspartate 172 and threonine 213 to lysine 219. The region spanning lysine 277–isoleucine 354 is the PUA domain.

It belongs to the glutamate 5-kinase family.

Its subcellular location is the cytoplasm. It catalyses the reaction L-glutamate + ATP = L-glutamyl 5-phosphate + ADP. The protein operates within amino-acid biosynthesis; L-proline biosynthesis; L-glutamate 5-semialdehyde from L-glutamate: step 1/2. Its function is as follows. Catalyzes the transfer of a phosphate group to glutamate to form L-glutamate 5-phosphate. The polypeptide is Glutamate 5-kinase (Pelagibacter ubique (strain HTCC1062)).